A 260-amino-acid polypeptide reads, in one-letter code: Putative ATP-binding protein BruAb2_1123 (260 aa).

The 224-residue stretch at 5 to 228 (ISFNNVVMRY…DLPYPRTEAI (224 aa)) folds into the ABC transporter domain. 37–44 (GPSGCGKS) is a binding site for ATP.

It belongs to the ABC transporter superfamily. As to quaternary structure, the complex is composed of two ATP-binding proteins (BruAb2_1123), two transmembrane proteins (BruAb2_1124) and a solute-binding protein (BruAb2_1122).

It is found in the cell inner membrane. Functionally, probably part of an ABC transporter complex. Probably Responsible for energy coupling to the transport system. This is Putative ATP-binding protein BruAb2_1123 from Brucella abortus biovar 1 (strain 9-941).